A 268-amino-acid chain; its full sequence is GTP cyclohydrolase FolE2 (268 aa).

This sequence belongs to the GTP cyclohydrolase IV family.

It catalyses the reaction GTP + H2O = 7,8-dihydroneopterin 3'-triphosphate + formate + H(+). It functions in the pathway cofactor biosynthesis; 7,8-dihydroneopterin triphosphate biosynthesis; 7,8-dihydroneopterin triphosphate from GTP: step 1/1. Functionally, converts GTP to 7,8-dihydroneopterin triphosphate. This Paraburkholderia phymatum (strain DSM 17167 / CIP 108236 / LMG 21445 / STM815) (Burkholderia phymatum) protein is GTP cyclohydrolase FolE2.